A 64-amino-acid polypeptide reads, in one-letter code: MPKMKTHSGAKKRFRVTGSGKIMRQQANRRHYLEHKSSRLTRRLKGDQLVSKGSIKQIKRMLGI.

This sequence belongs to the bacterial ribosomal protein bL35 family.

The protein is Large ribosomal subunit protein bL35 of Micrococcus luteus (strain ATCC 4698 / DSM 20030 / JCM 1464 / CCM 169 / CCUG 5858 / IAM 1056 / NBRC 3333 / NCIMB 9278 / NCTC 2665 / VKM Ac-2230) (Micrococcus lysodeikticus).